Reading from the N-terminus, the 995-residue chain is Pheromone-regulated membrane protein 10 (995 aa).

Disordered regions lie at residues 1-217 (MSSH…GEKH), 253-299 (GRVL…AVEM), 326-407 (DQSF…YIAP), and 425-508 (NPQD…NPDQ). Over residues 74 to 88 (SNSSTTNNSTESSGS) the composition is skewed to low complexity. Positions 110-121 (VKGESGDAHEGS) are enriched in basic and acidic residues. Low complexity predominate over residues 157–166 (SRGSVGSSSS). Residues 170–187 (KGSDDVNEKETNLDHDYD) show a composition bias toward basic and acidic residues. Over residues 259–269 (GSGGGGGGGLI) the composition is skewed to gly residues. A compositionally biased stretch (acidic residues) spans 283 to 296 (EEKEVGGGGEDDGA). Polar residues predominate over residues 326 to 347 (DQSFTYDEPNQSAGSSRNSTAP). 2 stretches are compositionally biased toward basic and acidic residues: residues 359–371 (DDHK…DQGK) and 385–396 (GNDDPEDQHLLL). The segment covering 495-506 (EADDEDEDEENP) has biased composition (acidic residues). The next 10 membrane-spanning stretches (helical) occupy residues 678-698 (VFLY…GGWL), 700-720 (IPVT…VSSM), 726-746 (SVFE…IGSI), 752-772 (FCFS…YIIL), 794-814 (IIYS…FGWV), 833-850 (KYRI…GLIN), 858-878 (PVMM…GKHF), 881-901 (VPEF…NVYS), 906-926 (GMAV…GIAS), and 965-985 (VEVS…VYPF).

The protein belongs to the ThrE exporter (TC 2.A.79) family.

It localises to the membrane. In Pichia sorbitophila (strain ATCC MYA-4447 / BCRC 22081 / CBS 7064 / NBRC 10061 / NRRL Y-12695) (Hybrid yeast), this protein is Pheromone-regulated membrane protein 10.